A 229-amino-acid polypeptide reads, in one-letter code: MSKLSHSEVLNTIRNGLIASCQPVDDGPMDKPEIVAAMAQASLIGGAAGLRIEGVDNLKATRPTVKAPIIAIVKRDLPDSPVRITPFLQDIDDLAAAGADIIAVDGTDRVRPVTIEAALKRIHELGCLAMADCSTLAEGLYCQQLGFDIVGSTMSGYTGGEVPNEPDYQLVKDLKAAGCFVMAEGRYNSPRLAKTAIEIGADCVTVGSALTRLEHIVGWFADEIKTAKV.

The protein belongs to the NanE family.

It carries out the reaction an N-acyl-D-glucosamine 6-phosphate = an N-acyl-D-mannosamine 6-phosphate. Its pathway is amino-sugar metabolism; N-acetylneuraminate degradation; D-fructose 6-phosphate from N-acetylneuraminate: step 3/5. Converts N-acetylmannosamine-6-phosphate (ManNAc-6-P) to N-acetylglucosamine-6-phosphate (GlcNAc-6-P). The polypeptide is Putative N-acetylmannosamine-6-phosphate 2-epimerase (Actinobacillus pleuropneumoniae serotype 3 (strain JL03)).